The chain runs to 569 residues: Proline--tRNA ligase (569 aa).

Belongs to the class-II aminoacyl-tRNA synthetase family. ProS type 1 subfamily. As to quaternary structure, homodimer.

The protein localises to the cytoplasm. The catalysed reaction is tRNA(Pro) + L-proline + ATP = L-prolyl-tRNA(Pro) + AMP + diphosphate. Functionally, catalyzes the attachment of proline to tRNA(Pro) in a two-step reaction: proline is first activated by ATP to form Pro-AMP and then transferred to the acceptor end of tRNA(Pro). As ProRS can inadvertently accommodate and process non-cognate amino acids such as alanine and cysteine, to avoid such errors it has two additional distinct editing activities against alanine. One activity is designated as 'pretransfer' editing and involves the tRNA(Pro)-independent hydrolysis of activated Ala-AMP. The other activity is designated 'posttransfer' editing and involves deacylation of mischarged Ala-tRNA(Pro). The misacylated Cys-tRNA(Pro) is not edited by ProRS. This is Proline--tRNA ligase from Campylobacter hominis (strain ATCC BAA-381 / DSM 21671 / CCUG 45161 / LMG 19568 / NCTC 13146 / CH001A).